A 466-amino-acid chain; its full sequence is DNA polymerase delta subunit 3 (466 aa).

Ala2 carries the N-acetylalanine modification. Disordered regions lie at residues Asn169 to Gln188 and Lys199 to Gly232. The segment covering Glu206 to Glu217 has biased composition (basic and acidic residues). A Glycyl lysine isopeptide (Lys-Gly) (interchain with G-Cter in SUMO); alternate cross-link involves residue Lys258. Lys258 participates in a covalent cross-link: Glycyl lysine isopeptide (Lys-Gly) (interchain with G-Cter in SUMO2); alternate. Lys261 participates in a covalent cross-link: Glycyl lysine isopeptide (Lys-Gly) (interchain with G-Cter in SUMO2). 2 disordered regions span residues Lys274–Leu393 and Glu406–Lys466. Thr277 carries the post-translational modification Phosphothreonine. Basic and acidic residues predominate over residues Lys286–Lys296. At Ser307 the chain carries Phosphoserine. Residues Pro349–Pro361 are compositionally biased toward pro residues. Phosphoserine is present on residues Ser407 and Ser409. Thr411 is subject to Phosphothreonine. Ser413 carries the post-translational modification Phosphoserine. Positions Val432–Lys441 are enriched in basic and acidic residues. A Glycyl lysine isopeptide (Lys-Gly) (interchain with G-Cter in SUMO); alternate cross-link involves residue Lys433. Residue Lys433 forms a Glycyl lysine isopeptide (Lys-Gly) (interchain with G-Cter in SUMO2); alternate linkage. A compositionally biased stretch (polar residues) spans Arg455–Lys466. Residues Gln456–Phe463 carry the PIP-box motif. Position 458 is a phosphoserine (Ser458).

Component of both the DNA polymerase delta and DNA polymerase zeta complexes. The tetrameric DNA polymerase delta complex (Pol-delta4), which consists of POLD1/p125, POLD2/p50, POLD3/p66/p68 and POLD4/p12, with POLD1 bearing DNA polymerase and 3' to 5' proofreading exonuclease activities. Within this complex, directly interacts with POLD2. Following stress caused by DNA damaging agents or by replication stress, POLD4 is degraded and Pol-delta4 is converted into a trimeric form of the complex (Pol-delta3), which consists of POLD1, POLD2 and POLD3. Pol-delta3 is the major form occurring at S phase replication sites, as well as DNA damage sites. Directly interacts with PCNA, as do POLD1 and POLD4; this interaction stimulates Pol-delta polymerase activity. POLD3 phosphorylation at Ser-458 impairs PCNA binding. Component of the DNA polymerase zeta complex (POLZ), which consists of REV3L, MAD2L2, POLD2 and POLD3, with REV3L bearing DNA polymerase catalytic activity. The DNA polymerase delta complex interacts with POLDIP2; this interaction is probably mediated through direct binding to POLD2. Ubiquitinated, but not targeted to the proteasome. Sumoylated. Sumoylation with SUMO3 may be predominant. Post-translationally, phosphorylation at Ser-458 is catalyzed in vitro by PKA. It is thought to decrease the affinity for PCNA and Pol-delta4 processivity. Can also be phosphorylated in vitro by CDK1-cyclin-A complex, as well as CDK2-cyclin-A and CDK2-cyclin-E complexes. PCNA interferes with CDK-cyclin phosphorylation.

It is found in the cytoplasm. Its subcellular location is the nucleus. Functionally, accessory component of both the DNA polymerase delta complex and the DNA polymerase zeta complex. As a component of the trimeric and tetrameric DNA polymerase delta complexes (Pol-delta3 and Pol-delta4, respectively), plays a role in high fidelity genome replication, including in lagging strand synthesis, and repair. Required for optimal Pol-delta activity. Stabilizes the Pol-delta complex and plays a major role in Pol-delta stimulation by PCNA. Pol-delta3 and Pol-delta4 are characterized by the absence or the presence of POLD4. They exhibit differences in catalytic activity. Most notably, Pol-delta3 shows higher proofreading activity than Pol-delta4. Although both Pol-delta3 and Pol-delta4 process Okazaki fragments in vitro, Pol-delta3 may also be better suited to fulfill this task, exhibiting near-absence of strand displacement activity compared to Pol-delta4 and stalling on encounter with the 5'-blocking oligonucleotides. Pol-delta3 idling process may avoid the formation of a gap, while maintaining a nick that can be readily ligated. Along with DNA polymerase kappa, DNA polymerase delta carries out approximately half of nucleotide excision repair (NER) synthesis following UV irradiation. In this context, POLD3, along with PCNA and RFC1-replication factor C complex, is required to recruit POLD1, the catalytic subunit of the polymerase delta complex, to DNA damage sites. Under conditions of DNA replication stress, required for the repair of broken replication forks through break-induced replication (BIR). Involved in the translesion synthesis (TLS) of templates carrying O6-methylguanine or abasic sites performed by Pol-delta4, independently of DNA polymerase zeta (REV3L) or eta (POLH). Facilitates abasic site bypass by DNA polymerase delta by promoting extension from the nucleotide inserted opposite the lesion. Also involved in TLS, as a component of the tetrameric DNA polymerase zeta complex. Along with POLD2, dramatically increases the efficiency and processivity of DNA synthesis of the DNA polymerase zeta complex compared to the minimal zeta complex, consisting of only REV3L and REV7. The sequence is that of DNA polymerase delta subunit 3 (POLD3) from Homo sapiens (Human).